Reading from the N-terminus, the 321-residue chain is Lipoyl synthase (321 aa).

The [4Fe-4S] cluster site is built by Cys68, Cys73, Cys79, Cys94, Cys98, Cys101, and Ser308. The region spanning Phe80–Thr297 is the Radical SAM core domain.

This sequence belongs to the radical SAM superfamily. Lipoyl synthase family. [4Fe-4S] cluster serves as cofactor.

The protein resides in the cytoplasm. The enzyme catalyses [[Fe-S] cluster scaffold protein carrying a second [4Fe-4S](2+) cluster] + N(6)-octanoyl-L-lysyl-[protein] + 2 oxidized [2Fe-2S]-[ferredoxin] + 2 S-adenosyl-L-methionine + 4 H(+) = [[Fe-S] cluster scaffold protein] + N(6)-[(R)-dihydrolipoyl]-L-lysyl-[protein] + 4 Fe(3+) + 2 hydrogen sulfide + 2 5'-deoxyadenosine + 2 L-methionine + 2 reduced [2Fe-2S]-[ferredoxin]. It functions in the pathway protein modification; protein lipoylation via endogenous pathway; protein N(6)-(lipoyl)lysine from octanoyl-[acyl-carrier-protein]: step 2/2. Its function is as follows. Catalyzes the radical-mediated insertion of two sulfur atoms into the C-6 and C-8 positions of the octanoyl moiety bound to the lipoyl domains of lipoate-dependent enzymes, thereby converting the octanoylated domains into lipoylated derivatives. The sequence is that of Lipoyl synthase from Vibrio vulnificus (strain CMCP6).